Reading from the N-terminus, the 828-residue chain is Mediator of RNA polymerase II transcription subunit 16 (828 aa).

WD repeat units follow at residues 68–107 (GHQE…ANSW), 199–241 (RCRV…VSEK), 264–308 (DKFP…LPLN), 622–663 (NQGS…CLPV), and 777–816 (FPTE…TCLC).

This sequence belongs to the Mediator complex subunit 16 family. In terms of assembly, component of the Mediator complex.

The protein resides in the nucleus. Functionally, component of the Mediator complex, a coactivator involved in the regulated transcription of nearly all RNA polymerase II-dependent genes. Mediator functions as a bridge to convey information from gene-specific regulatory proteins to the basal RNA polymerase II transcription machinery. Mediator is recruited to promoters by direct interactions with regulatory proteins and serves as a scaffold for the assembly of a functional preinitiation complex with RNA polymerase II and the general transcription factors. This Xenopus tropicalis (Western clawed frog) protein is Mediator of RNA polymerase II transcription subunit 16 (med16).